Consider the following 99-residue polypeptide: Small ribosomal subunit protein eS24 (99 aa).

Belongs to the eukaryotic ribosomal protein eS24 family.

This chain is Small ribosomal subunit protein eS24 (rps2e), found in Thermoplasma volcanium (strain ATCC 51530 / DSM 4299 / JCM 9571 / NBRC 15438 / GSS1).